Consider the following 428-residue polypeptide: tRNA modification GTPase MnmE (428 aa).

Residues R20, E76, and R116 each contribute to the (6S)-5-formyl-5,6,7,8-tetrahydrofolate site. Residues 212–351 enclose the TrmE-type G domain; that stretch reads GFEVAIIGAP…LVEALQDRLL (140 aa). Position 222 (N222) interacts with K(+). GTP contacts are provided by residues 222-227, 241-247, and 266-269; these read NAGKST, SEVAGTT, and DTAG. Residue S226 participates in Mg(2+) binding. K(+) contacts are provided by S241, V243, and T246. Position 247 (T247) interacts with Mg(2+). Residue K428 coordinates (6S)-5-formyl-5,6,7,8-tetrahydrofolate.

This sequence belongs to the TRAFAC class TrmE-Era-EngA-EngB-Septin-like GTPase superfamily. TrmE GTPase family. As to quaternary structure, homodimer. Heterotetramer of two MnmE and two MnmG subunits. It depends on K(+) as a cofactor.

Its subcellular location is the cytoplasm. Its function is as follows. Exhibits a very high intrinsic GTPase hydrolysis rate. Involved in the addition of a carboxymethylaminomethyl (cmnm) group at the wobble position (U34) of certain tRNAs, forming tRNA-cmnm(5)s(2)U34. In Cereibacter sphaeroides (strain ATCC 17025 / ATH 2.4.3) (Rhodobacter sphaeroides), this protein is tRNA modification GTPase MnmE.